Reading from the N-terminus, the 628-residue chain is Beta-lactamase-like protein 1 (628 aa).

The first 28 residues, 1-28 (MKNILSFSFSFSFLYILFLLLFLNNNLL), serve as a signal peptide directing secretion. N-linked (GlcNAc...) asparagine glycosylation is found at N45, N68, N198, and N241. The segment covering 245–281 (NNNNNNNNNNNNNNNNNNNNNNNNNNNNNNNNNNNNN) has biased composition (low complexity). The tract at residues 245–285 (NNNNNNNNNNNNNNNNNNNNNNNNNNNNNNNNNNNNNKIKT) is disordered. N313 and N335 each carry an N-linked (GlcNAc...) asparagine glycan. The disordered stretch occupies residues 494–516 (EKEEKEEEEENQQDESQQQQQQQ). Over residues 496-506 (EEKEEEEENQQ) the composition is skewed to acidic residues. The segment covering 507–516 (DESQQQQQQQ) has biased composition (low complexity).

The protein belongs to the beta-lactamase family.

It is found in the secreted. The protein is Beta-lactamase-like protein 1 of Dictyostelium discoideum (Social amoeba).